Reading from the N-terminus, the 240-residue chain is Uridylate kinase (240 aa).

Residue 12–15 (KLSG) participates in ATP binding. G54 is a binding site for UMP. G55 and R59 together coordinate ATP. UMP contacts are provided by residues D74 and 135-142 (TGNPFFTT). ATP is bound by residues T162, Y168, and D171.

This sequence belongs to the UMP kinase family. As to quaternary structure, homohexamer.

The protein localises to the cytoplasm. It catalyses the reaction UMP + ATP = UDP + ADP. The protein operates within pyrimidine metabolism; CTP biosynthesis via de novo pathway; UDP from UMP (UMPK route): step 1/1. Inhibited by UTP. Its function is as follows. Catalyzes the reversible phosphorylation of UMP to UDP. This is Uridylate kinase from Xanthomonas axonopodis pv. citri (strain 306).